A 253-amino-acid chain; its full sequence is MVLIRVIANLLILQLSYAQKSSELVIGGDECNINEHPFLAFLYTGWIFCSGTLINKEWVLTVKQCNNRRPMRIYLGMHTRSVPNDDEEIRYPKEMFICPNKKKNDIMLIRLNRPVNNSEHIAPLSLPSNPPSVGSVCRIMGWGTITPSKATYPDVPHCANINLFNYTVCRGAHAGLPVTSRKLCAGVLEGGIDTCSADSGGPLICNGQLQGIVSWRGGSCAQPHKPGLYTKVFDYLPWIQSIIAGSTTATCPP.

The signal sequence occupies residues 1–18; it reads MVLIRVIANLLILQLSYA. A propeptide spanning residues 19–24 is cleaved from the precursor; sequence QKSSEL. Residues 25–244 enclose the Peptidase S1 domain; the sequence is VIGGDECNIN…YLPWIQSIIA (220 aa). 6 disulfide bridges follow: cysteine 31-cysteine 158, cysteine 49-cysteine 65, cysteine 98-cysteine 251, cysteine 137-cysteine 205, cysteine 169-cysteine 184, and cysteine 195-cysteine 220. Residues asparagine 116 and asparagine 165 are each glycosylated (N-linked (GlcNAc...) asparagine).

This sequence belongs to the peptidase S1 family. Snake venom subfamily. In terms of tissue distribution, expressed by the venom gland.

The protein localises to the secreted. In terms of biological role, snake venom serine protease homolog that may act in the hemostasis system of the prey. In Bothrops jararaca (Jararaca), this protein is Snake venom serine protease homolog HS120.